The following is a 152-amino-acid chain: Deoxyuridine 5'-triphosphate nucleotidohydrolase (152 aa).

Substrate-binding positions include 71–73 (RSG), Asn84, 88–90 (LID), and Met98.

The protein belongs to the dUTPase family. Mg(2+) serves as cofactor.

It catalyses the reaction dUTP + H2O = dUMP + diphosphate + H(+). Its pathway is pyrimidine metabolism; dUMP biosynthesis; dUMP from dCTP (dUTP route): step 2/2. Functionally, this enzyme is involved in nucleotide metabolism: it produces dUMP, the immediate precursor of thymidine nucleotides and it decreases the intracellular concentration of dUTP so that uracil cannot be incorporated into DNA. This Shewanella piezotolerans (strain WP3 / JCM 13877) protein is Deoxyuridine 5'-triphosphate nucleotidohydrolase.